The sequence spans 214 residues: Probable transaldolase (214 aa).

Lys83 serves as the catalytic Schiff-base intermediate with substrate.

Belongs to the transaldolase family. Type 3B subfamily.

The protein localises to the cytoplasm. It catalyses the reaction D-sedoheptulose 7-phosphate + D-glyceraldehyde 3-phosphate = D-erythrose 4-phosphate + beta-D-fructose 6-phosphate. It participates in carbohydrate degradation; pentose phosphate pathway; D-glyceraldehyde 3-phosphate and beta-D-fructose 6-phosphate from D-ribose 5-phosphate and D-xylulose 5-phosphate (non-oxidative stage): step 2/3. Its function is as follows. Transaldolase is important for the balance of metabolites in the pentose-phosphate pathway. The chain is Probable transaldolase from Brevibacillus brevis (strain 47 / JCM 6285 / NBRC 100599).